The following is a 231-amino-acid chain: 2,3,4,5-tetrahydropyridine-2,6-dicarboxylate N-acetyltransferase (231 aa).

Belongs to the transferase hexapeptide repeat family. DapH subfamily.

The catalysed reaction is (S)-2,3,4,5-tetrahydrodipicolinate + acetyl-CoA + H2O = L-2-acetamido-6-oxoheptanedioate + CoA. Its pathway is amino-acid biosynthesis; L-lysine biosynthesis via DAP pathway; LL-2,6-diaminopimelate from (S)-tetrahydrodipicolinate (acetylase route): step 1/3. Functionally, catalyzes the transfer of an acetyl group from acetyl-CoA to tetrahydrodipicolinate. The chain is 2,3,4,5-tetrahydropyridine-2,6-dicarboxylate N-acetyltransferase from Thermosipho melanesiensis (strain DSM 12029 / CIP 104789 / BI429).